The primary structure comprises 134 residues: MTDNLGKMLNKIKNAILVKHEAVLIPYTLNNFLILRILEQEGFLDSINIVCKKKKREYKYIKVYLKYNEQTSKSFIRNICRLSKPSLRVYTNSKKIPRILNGLGIIIVSTSKGVMTSKDAYSNNIGGELLFSIW.

This sequence belongs to the universal ribosomal protein uS8 family. Part of the 30S ribosomal subunit.

Its subcellular location is the plastid. It is found in the chloroplast. One of the primary rRNA binding proteins, it binds directly to 16S rRNA central domain where it helps coordinate assembly of the platform of the 30S subunit. This Bigelowiella natans (Pedinomonas minutissima) protein is Small ribosomal subunit protein uS8c (rps8).